A 192-amino-acid chain; its full sequence is Orotate phosphoribosyltransferase (192 aa).

116-124 is a binding site for 5-phospho-alpha-D-ribose 1-diphosphate; sequence EDIVTTGLS. T120 and R148 together coordinate orotate.

It belongs to the purine/pyrimidine phosphoribosyltransferase family. PyrE subfamily. As to quaternary structure, homodimer. Mg(2+) serves as cofactor.

It carries out the reaction orotidine 5'-phosphate + diphosphate = orotate + 5-phospho-alpha-D-ribose 1-diphosphate. Its pathway is pyrimidine metabolism; UMP biosynthesis via de novo pathway; UMP from orotate: step 1/2. Its function is as follows. Catalyzes the transfer of a ribosyl phosphate group from 5-phosphoribose 1-diphosphate to orotate, leading to the formation of orotidine monophosphate (OMP). This Bartonella henselae (strain ATCC 49882 / DSM 28221 / CCUG 30454 / Houston 1) (Rochalimaea henselae) protein is Orotate phosphoribosyltransferase.